The following is a 433-amino-acid chain: ATP-dependent RNA helicase SUB2 (433 aa).

Positions 49–77 match the Q motif motif; it reads TGFRDFLLKPELLRAIGDCGFEHPSEVQQ. Residues 80–255 enclose the Helicase ATP-binding domain; that stretch reads IPQSILGTDV…KKFMQNPLEI (176 aa). ATP is bound at residue 93–100; sequence AKSGLGKT. The short motif at 202–205 is the DEAD box element; the sequence is DECD. The Helicase C-terminal domain occupies 267-428; sequence GLQQYYIKLE…EFPEEGVDPS (162 aa).

Belongs to the DEAD box helicase family. DECD subfamily.

It is found in the nucleus. The enzyme catalyses ATP + H2O = ADP + phosphate + H(+). Its function is as follows. ATP-binding RNA helicase involved in transcription elongation and required for the export of mRNA out of the nucleus. SUB2 also plays a role in pre-mRNA splicing and spliceosome assembly. May be involved in rDNA and telomeric silencing, and maintenance of genome integrity. This chain is ATP-dependent RNA helicase SUB2 (SUB2), found in Scheffersomyces stipitis (strain ATCC 58785 / CBS 6054 / NBRC 10063 / NRRL Y-11545) (Yeast).